The sequence spans 240 residues: Intestine-specific homeobox (240 aa).

The segment at 36-82 (PTERRSLPRPQSICKEDSRQTTIPGSKLERPPQDQPQEEKKNKRRVR) is disordered. The segment covering 62-76 (KLERPPQDQPQEEKK) has biased composition (basic and acidic residues). The segment at residues 78–137 (KRRVRTTFTTEQLQELEKLFHFTHYPDIHVRSQLASRINLPEARVQIWFQNQRAKWRKQE) is a DNA-binding region (homeobox).

As to expression, expressed in intestinal epithelial cells from the duodenum to the proximal colon.

The protein resides in the nucleus. Functionally, transcription factor that regulates gene expression in intestine. May participate in vitamin A metabolism most likely by regulating BCO1 expression in the intestine. The chain is Intestine-specific homeobox (Isx) from Mus musculus (Mouse).